We begin with the raw amino-acid sequence, 427 residues long: Diaminobutyrate--2-oxoglutarate transaminase (427 aa).

K264 is subject to N6-(pyridoxal phosphate)lysine.

The protein belongs to the class-III pyridoxal-phosphate-dependent aminotransferase family. Pyridoxal 5'-phosphate is required as a cofactor.

The catalysed reaction is L-2,4-diaminobutanoate + 2-oxoglutarate = L-aspartate 4-semialdehyde + L-glutamate. It functions in the pathway amine and polyamine biosynthesis; ectoine biosynthesis; L-ectoine from L-aspartate 4-semialdehyde: step 1/3. Its function is as follows. Catalyzes reversively the conversion of L-aspartate beta-semialdehyde (ASA) to L-2,4-diaminobutyrate (DABA) by transamination with L-glutamate. The sequence is that of Diaminobutyrate--2-oxoglutarate transaminase (ectB) from Wolinella succinogenes (strain ATCC 29543 / DSM 1740 / CCUG 13145 / JCM 31913 / LMG 7466 / NCTC 11488 / FDC 602W) (Vibrio succinogenes).